The chain runs to 592 residues: Aspartate--tRNA(Asp/Asn) ligase (592 aa).

Position 182 (E182) interacts with L-aspartate. The aspartate stretch occupies residues 206–209 (QIFK). R228 contributes to the L-aspartate binding site. ATP is bound by residues 228 to 230 (RDE) and Q237. H455 is a binding site for L-aspartate. E489 is a binding site for ATP. R496 contacts L-aspartate. 541 to 544 (GLDR) is an ATP binding site.

The protein belongs to the class-II aminoacyl-tRNA synthetase family. Type 1 subfamily. As to quaternary structure, homodimer.

Its subcellular location is the cytoplasm. The enzyme catalyses tRNA(Asx) + L-aspartate + ATP = L-aspartyl-tRNA(Asx) + AMP + diphosphate. Aspartyl-tRNA synthetase with relaxed tRNA specificity since it is able to aspartylate not only its cognate tRNA(Asp) but also tRNA(Asn). Reaction proceeds in two steps: L-aspartate is first activated by ATP to form Asp-AMP and then transferred to the acceptor end of tRNA(Asp/Asn). The sequence is that of Aspartate--tRNA(Asp/Asn) ligase from Caldanaerobacter subterraneus subsp. tengcongensis (strain DSM 15242 / JCM 11007 / NBRC 100824 / MB4) (Thermoanaerobacter tengcongensis).